Here is a 281-residue protein sequence, read N- to C-terminus: 4-diphosphocytidyl-2-C-methyl-D-erythritol kinase (281 aa).

The active site involves K15. An ATP-binding site is contributed by 98–108 (PTGAGLGGGSS). D140 is a catalytic residue.

This sequence belongs to the GHMP kinase family. IspE subfamily.

It catalyses the reaction 4-CDP-2-C-methyl-D-erythritol + ATP = 4-CDP-2-C-methyl-D-erythritol 2-phosphate + ADP + H(+). The protein operates within isoprenoid biosynthesis; isopentenyl diphosphate biosynthesis via DXP pathway; isopentenyl diphosphate from 1-deoxy-D-xylulose 5-phosphate: step 3/6. In terms of biological role, catalyzes the phosphorylation of the position 2 hydroxy group of 4-diphosphocytidyl-2C-methyl-D-erythritol. This chain is 4-diphosphocytidyl-2-C-methyl-D-erythritol kinase, found in Neisseria gonorrhoeae (strain NCCP11945).